The sequence spans 154 residues: Protein FasC (154 aa).

This sequence belongs to the periplasmic pilus chaperone family.

Its function is as follows. Could be required for the biogenesis of a putative fimbria. The chain is Protein FasC (fasC) from Escherichia coli.